The primary structure comprises 228 residues: Cytidylate kinase (228 aa).

11 to 19 (GPASAGKST) is an ATP binding site.

It belongs to the cytidylate kinase family. Type 1 subfamily.

It localises to the cytoplasm. It carries out the reaction CMP + ATP = CDP + ADP. The catalysed reaction is dCMP + ATP = dCDP + ADP. This is Cytidylate kinase from Limosilactobacillus reuteri (strain DSM 20016) (Lactobacillus reuteri).